The following is a 295-amino-acid chain: MMRILVTNPAPMTCLPPWIIIDPWLQQWLAEDIGRGDWSTQGLGLQHRGQARWVAKENGVIAGLPMAARIFQLLDPSMEFQVLAGEGQAVTASTVVATMAGNLGSLLTGERVALNLVMGLSGIATMTRQYVQAIADYPTRFVDTRKTTPGLRVLEKYASRLGGAMNHRLGLDDAVMVKDNHIQAAGSITKAVQTLRQNLPYPLAIEVETSNLEEVQEAIATQVEIIMLDNMGTDTMATAVKLIRQANPLIRIEASGNVTLANLTAIASTGVDFISSSAPITRSPWLDLSMQIVRN.

Residues Arg111, 144–146 (TRK), Arg168, Lys178, Glu208, Asp229, and 255–257 (SGN) contribute to the substrate site.

The protein belongs to the NadC/ModD family. In terms of assembly, hexamer formed by 3 homodimers.

The catalysed reaction is nicotinate beta-D-ribonucleotide + CO2 + diphosphate = quinolinate + 5-phospho-alpha-D-ribose 1-diphosphate + 2 H(+). It functions in the pathway cofactor biosynthesis; NAD(+) biosynthesis; nicotinate D-ribonucleotide from quinolinate: step 1/1. Its function is as follows. Involved in the catabolism of quinolinic acid (QA). In Synechocystis sp. (strain ATCC 27184 / PCC 6803 / Kazusa), this protein is Probable nicotinate-nucleotide pyrophosphorylase [carboxylating] (nadC).